Here is a 212-residue protein sequence, read N- to C-terminus: 3,4-dihydroxy-2-butanone 4-phosphate synthase (212 aa).

D-ribulose 5-phosphate-binding positions include 37–38 (RE), D42, 150–154 (RRGHT), and E174. Residue E38 coordinates Mg(2+). H153 contributes to the Mg(2+) binding site.

Belongs to the DHBP synthase family. As to quaternary structure, homodimer. It depends on Mg(2+) as a cofactor. The cofactor is Mn(2+).

The catalysed reaction is D-ribulose 5-phosphate = (2S)-2-hydroxy-3-oxobutyl phosphate + formate + H(+). It functions in the pathway cofactor biosynthesis; riboflavin biosynthesis; 2-hydroxy-3-oxobutyl phosphate from D-ribulose 5-phosphate: step 1/1. Functionally, catalyzes the conversion of D-ribulose 5-phosphate to formate and 3,4-dihydroxy-2-butanone 4-phosphate. The sequence is that of 3,4-dihydroxy-2-butanone 4-phosphate synthase from Shewanella halifaxensis (strain HAW-EB4).